The sequence spans 144 residues: MVITLVGEKLAKPGVEFIYYGPAEPCKSCRLARVCTGNLEPGRRYKIIKVRNMEYPCLLHEGKVRVVEVVEPAIDVIIEPRYAVAGSKITLKFVECDDPEKVDLVRPEGLFEGDVVKILEIIGDIECNGRKYKIAKVIRENTQK.

The protein belongs to the UPF0179 family.

This is UPF0179 protein PF1381 from Pyrococcus furiosus (strain ATCC 43587 / DSM 3638 / JCM 8422 / Vc1).